The primary structure comprises 762 residues: Phosphoribosylformylglycinamidine synthase subunit PurL (762 aa).

The active site involves histidine 58. 2 residues coordinate ATP: tyrosine 61 and arginine 105. Glutamate 107 provides a ligand contact to Mg(2+). Substrate-binding positions include 108–111 and arginine 130; that span reads SHNH. Histidine 109 (proton acceptor) is an active-site residue. Aspartate 131 serves as a coordination point for Mg(2+). Residue glutamine 255 participates in substrate binding. Residue aspartate 283 participates in Mg(2+) binding. 327–329 is a binding site for substrate; it reads ESQ. ATP-binding residues include asparagine 513 and glycine 550. Residue asparagine 551 participates in Mg(2+) binding. Serine 553 is a binding site for substrate.

It belongs to the FGAMS family. In terms of assembly, monomer. Part of the FGAM synthase complex composed of 1 PurL, 1 PurQ and 2 PurS subunits.

It localises to the cytoplasm. It catalyses the reaction N(2)-formyl-N(1)-(5-phospho-beta-D-ribosyl)glycinamide + L-glutamine + ATP + H2O = 2-formamido-N(1)-(5-O-phospho-beta-D-ribosyl)acetamidine + L-glutamate + ADP + phosphate + H(+). The protein operates within purine metabolism; IMP biosynthesis via de novo pathway; 5-amino-1-(5-phospho-D-ribosyl)imidazole from N(2)-formyl-N(1)-(5-phospho-D-ribosyl)glycinamide: step 1/2. Functionally, part of the phosphoribosylformylglycinamidine synthase complex involved in the purines biosynthetic pathway. Catalyzes the ATP-dependent conversion of formylglycinamide ribonucleotide (FGAR) and glutamine to yield formylglycinamidine ribonucleotide (FGAM) and glutamate. The FGAM synthase complex is composed of three subunits. PurQ produces an ammonia molecule by converting glutamine to glutamate. PurL transfers the ammonia molecule to FGAR to form FGAM in an ATP-dependent manner. PurS interacts with PurQ and PurL and is thought to assist in the transfer of the ammonia molecule from PurQ to PurL. This is Phosphoribosylformylglycinamidine synthase subunit PurL from Corynebacterium glutamicum (strain R).